The primary structure comprises 215 residues: Fanconi anemia core complex-associated protein 24 (215 aa).

The tract at residues 160 to 215 (LRTVQQIPGVGKVKAPLLLQKFPSIQQLSNASIGELEQVVGQAVAQQIHAFFTQPR) is ruvA domain 2-like.

In terms of assembly, belongs to the multisubunit FA complex composed of FANCA, FANCB, FANCC, FANCE, FANCF, FANCG, FANCL/PHF9, FANCM and FAAP24. Interacts with FANCM.

Its subcellular location is the nucleus. In terms of biological role, plays a role in DNA repair through recruitment of the FA core complex to damaged DNA. Regulates FANCD2 monoubiquitination upon DNA damage. Induces chromosomal instability as well as hypersensitivity to DNA cross-linking agents, when repressed. Targets FANCM/FAAP24 complex to the DNA, preferentially to single strand DNA. The protein is Fanconi anemia core complex-associated protein 24 of Homo sapiens (Human).